A 1293-amino-acid chain; its full sequence is Phosphoribosylformylglycinamidine synthase (1293 aa).

ATP contacts are provided by residues 305–316 and Ala676; that span reads GAATGSGGEIRD. The interval 305–328 is disordered; that stretch reads GAATGSGGEIRDEGATGRGSKPKA. 4 residues coordinate Mg(2+): Asp677, Glu716, Asn720, and Asp884. Residue Ser886 coordinates ATP. In terms of domain architecture, Glutamine amidotransferase type-1 spans 1040 to 1293; the sequence is MAILREQGVN…MFRNARVNLG (254 aa). Cys1133 serves as the catalytic Nucleophile. Residues His1258 and Glu1260 contribute to the active site.

In the N-terminal section; belongs to the FGAMS family. As to quaternary structure, monomer.

It is found in the cytoplasm. The catalysed reaction is N(2)-formyl-N(1)-(5-phospho-beta-D-ribosyl)glycinamide + L-glutamine + ATP + H2O = 2-formamido-N(1)-(5-O-phospho-beta-D-ribosyl)acetamidine + L-glutamate + ADP + phosphate + H(+). It participates in purine metabolism; IMP biosynthesis via de novo pathway; 5-amino-1-(5-phospho-D-ribosyl)imidazole from N(2)-formyl-N(1)-(5-phospho-D-ribosyl)glycinamide: step 1/2. In terms of biological role, phosphoribosylformylglycinamidine synthase involved in the purines biosynthetic pathway. Catalyzes the ATP-dependent conversion of formylglycinamide ribonucleotide (FGAR) and glutamine to yield formylglycinamidine ribonucleotide (FGAM) and glutamate. This chain is Phosphoribosylformylglycinamidine synthase, found in Shewanella sp. (strain MR-7).